A 604-amino-acid polypeptide reads, in one-letter code: Glutamine--fructose-6-phosphate aminotransferase [isomerizing] (604 aa).

Catalysis depends on Cys-2, which acts as the Nucleophile; for GATase activity. A Glutamine amidotransferase type-2 domain is found at 2 to 218 (CGIVGVVGNR…DKELVILTKD (217 aa)). SIS domains lie at 284-423 (IITS…ANGK) and 456-594 (VQAL…VDKP). The active-site For Fru-6P isomerization activity is the Lys-599.

Homodimer.

It is found in the cytoplasm. The enzyme catalyses D-fructose 6-phosphate + L-glutamine = D-glucosamine 6-phosphate + L-glutamate. In terms of biological role, catalyzes the first step in hexosamine metabolism, converting fructose-6P into glucosamine-6P using glutamine as a nitrogen source. The chain is Glutamine--fructose-6-phosphate aminotransferase [isomerizing] from Streptococcus pyogenes serotype M1.